A 332-amino-acid polypeptide reads, in one-letter code: MQIGPYSIAPKVILAPMAGVTDKPFRLLCKRLGAGLAVSEMTISDPRFWGTRKSLHRMDHAGEPDPISVQIAGTEPQQLAEAARYNVDHGAQLIDINMGCPAKKVCNAWAGSALMRDEELVARILTAVVQAVNVPVTLKIRTGWDCDHRNGPTIARIAQDCGIAALAVHGRTRDQHYTGSAEYATIAQIKAALQIPVVANGDIDSPQKAAQVLRETGADAVMIGRAAQGRPWIFGEVAHFLATGEVLPPPSLAFVRDTLLGHLEALHAFYGQPQGVRIARKHLGWYAKDHPQSADFRAVVNRAETPDAQLALTRDYFDALIAGVPPALSDAA.

FMN is bound by residues 16 to 18 and Gln70; that span reads PMA. Catalysis depends on Cys100, which acts as the Proton donor. Residues Lys139, 200–202, and 224–225 contribute to the FMN site; these read NGD and GR.

This sequence belongs to the Dus family. DusB subfamily. The cofactor is FMN.

The enzyme catalyses a 5,6-dihydrouridine in tRNA + NAD(+) = a uridine in tRNA + NADH + H(+). It carries out the reaction a 5,6-dihydrouridine in tRNA + NADP(+) = a uridine in tRNA + NADPH + H(+). Its function is as follows. Catalyzes the synthesis of 5,6-dihydrouridine (D), a modified base found in the D-loop of most tRNAs, via the reduction of the C5-C6 double bond in target uridines. The polypeptide is tRNA-dihydrouridine synthase B (Xanthomonas axonopodis pv. citri (strain 306)).